The following is a 20-amino-acid chain: Hemocyanin subunit Ib (20 aa).

The interval 1-20 is disordered; the sequence is DSVGSTTAHKQQNINHLLDK.

It belongs to the tyrosinase family. Hemocyanin subfamily. As to quaternary structure, composed of 3 major subunits (IB, II and III) and 1 minor subunit (IA) which form homohexamers and heterohexamers. May also form larger structures. Hemolymph.

The protein localises to the secreted. Its subcellular location is the extracellular space. Hemocyanins are copper-containing oxygen carriers occurring freely dissolved in the hemolymph of many mollusks and arthropods. The polypeptide is Hemocyanin subunit Ib (Panulirus japonicus (Japanese spiny lobster)).